The chain runs to 760 residues: NAD(P)H-quinone oxidoreductase subunit 5, chloroplastic (760 aa).

Helical transmembrane passes span 9 to 29 (WIIS…LLLF), 39 to 59 (IWAF…TDLF), 89 to 109 (IDPL…LVLV), 125 to 145 (FVYM…SNLI), 147 to 167 (IYIF…FWFT), 185 to 205 (GDFG…SFEF), 221 to 241 (NEVH…GAIA), 260 to 280 (TPIS…FLVA), 282 to 302 (LLPL…IGII), 329 to 349 (LGYT…FHLI), 356 to 376 (ALLF…VGYS), 398 to 418 (IAFL…CFWS), 429 to 449 (YSPI…FYMF), 556 to 576 (ILFP…IGIP), 620 to 640 (FSVS…KPIY), and 734 to 754 (FYLL…SSIF).

This sequence belongs to the complex I subunit 5 family. As to quaternary structure, NDH is composed of at least 16 different subunits, 5 of which are encoded in the nucleus.

It is found in the plastid. The protein resides in the chloroplast thylakoid membrane. The enzyme catalyses a plastoquinone + NADH + (n+1) H(+)(in) = a plastoquinol + NAD(+) + n H(+)(out). It carries out the reaction a plastoquinone + NADPH + (n+1) H(+)(in) = a plastoquinol + NADP(+) + n H(+)(out). In terms of biological role, NDH shuttles electrons from NAD(P)H:plastoquinone, via FMN and iron-sulfur (Fe-S) centers, to quinones in the photosynthetic chain and possibly in a chloroplast respiratory chain. The immediate electron acceptor for the enzyme in this species is believed to be plastoquinone. Couples the redox reaction to proton translocation, and thus conserves the redox energy in a proton gradient. The protein is NAD(P)H-quinone oxidoreductase subunit 5, chloroplastic (ndhF) of Populus alba (White poplar).